Reading from the N-terminus, the 550-residue chain is Rhodopsin kinase grk7-b (550 aa).

The interval 22 to 45 is disordered; it reads SSEGDAKELQKRRKSLSLPPPDVS. Residue serine 36 is modified to Phosphoserine. The 118-residue stretch at 57 to 174 folds into the RGS domain; it reads YQSICVEQPI…QNSPFYDRFL (118 aa). One can recognise a Protein kinase domain in the interval 189-451; that stretch reads FYEFRILGKG…DDDPRKHAFF (263 aa). Residues 195 to 203 and lysine 218 contribute to the ATP site; that span reads LGKGGFGEV. The Proton acceptor role is filled by aspartate 314. Residues 452 to 517 form the AGC-kinase C-terminal domain; it reads KSINFQRLEA…GAVPISWQKE (66 aa). Serine 487 is subject to Phosphoserine. Residues 531 to 550 are disordered; the sequence is SREVTGGGNSGEKSGVCSIL. Position 547 is a cysteine methyl ester (cysteine 547). The S-geranylgeranyl cysteine moiety is linked to residue cysteine 547. Residues 548–550 constitute a propeptide, removed in mature form; it reads SIL.

It belongs to the protein kinase superfamily. AGC Ser/Thr protein kinase family. GPRK subfamily. In terms of processing, autophosphorylated in vitro at Ser-487. Phosphorylation at Ser-36 is regulated by light and activated by cAMP. In terms of tissue distribution, retina, cones.

The protein resides in the membrane. The enzyme catalyses L-threonyl-[rhodopsin] + ATP = O-phospho-L-threonyl-[rhodopsin] + ADP + H(+). The catalysed reaction is L-seryl-[rhodopsin] + ATP = O-phospho-L-seryl-[rhodopsin] + ADP + H(+). Its function is as follows. Retina-specific kinase involved in the shutoff of the photoresponse and adaptation to changing light conditions via cone opsin phosphorylation, including rhodopsin (RHO). This is Rhodopsin kinase grk7-b (grk7-b) from Xenopus laevis (African clawed frog).